A 454-amino-acid polypeptide reads, in one-letter code: Asparagine--tRNA ligase (454 aa).

Belongs to the class-II aminoacyl-tRNA synthetase family. Homodimer.

Its subcellular location is the cytoplasm. The catalysed reaction is tRNA(Asn) + L-asparagine + ATP = L-asparaginyl-tRNA(Asn) + AMP + diphosphate + H(+). The chain is Asparagine--tRNA ligase from Microcystis aeruginosa (strain NIES-843 / IAM M-2473).